The following is a 423-amino-acid chain: GTPase ERA-like, chloroplastic (423 aa).

Residues 1–60 (MELGLALRLVAPPPRLPCRALQPPPMPCFSPCAARRSRIRSSRLERRVGVVVSGGSMASL) constitute a chloroplast transit peptide. Residues 124–294 (RSGYVAVLGK…KEWILSKLPL (171 aa)) enclose the Era-type G domain. Residues 132–139 (GKPNVGKS) form a G1 region. 132 to 139 (GKPNVGKS) is a binding site for GTP. The tract at residues 158 to 162 (QTTRH) is G2. The G3 stretch occupies residues 179–182 (DTPG). Residues 179–183 (DTPGV) and 244–247 (NKKD) each bind GTP. The tract at residues 244–247 (NKKD) is G4. Residues 273 to 275 (ISA) are G5. One can recognise a KH type-2 domain in the interval 325-402 (YRQEIPYACQ…YLEIMVKVKE (78 aa)).

This sequence belongs to the TRAFAC class TrmE-Era-EngA-EngB-Septin-like GTPase superfamily. Era GTPase family.

It is found in the plastid. The protein localises to the chloroplast stroma. It localises to the chloroplast nucleoid. Nuclear genome-encoded probable GTPase involved in ribosome biogenesis in chloroplasts. Plays a role in 16S rRNA maturation in plastids and may contribute to the assembly of the small (30S) ribosomal subunit. This chain is GTPase ERA-like, chloroplastic, found in Oryza sativa subsp. japonica (Rice).